An 892-amino-acid polypeptide reads, in one-letter code: UPF0182 protein Gura_0902 (892 aa).

Helical transmembrane passes span 6 to 26 (FIII…LINF), 50 to 70 (VGAG…NLHF), 103 to 123 (LGIL…AMQW), 158 to 178 (MLKI…GAVY), 201 to 221 (LAVL…LNGC), 248 to 268 (ILTV…WQGA), and 271 to 291 (LALL…KAYP).

Belongs to the UPF0182 family.

The protein localises to the cell membrane. In Geotalea uraniireducens (strain Rf4) (Geobacter uraniireducens), this protein is UPF0182 protein Gura_0902.